A 94-amino-acid chain; its full sequence is Co-chaperonin GroES (94 aa).

Belongs to the GroES chaperonin family. In terms of assembly, heptamer of 7 subunits arranged in a ring. Interacts with the chaperonin GroEL.

Its subcellular location is the cytoplasm. Its function is as follows. Together with the chaperonin GroEL, plays an essential role in assisting protein folding. The GroEL-GroES system forms a nano-cage that allows encapsulation of the non-native substrate proteins and provides a physical environment optimized to promote and accelerate protein folding. GroES binds to the apical surface of the GroEL ring, thereby capping the opening of the GroEL channel. This chain is Co-chaperonin GroES, found in Ehrlichia canis (strain Jake).